The primary structure comprises 284 residues: L-ribulose-5-phosphate 3-epimerase UlaE (284 aa).

The protein belongs to the L-ribulose-5-phosphate 3-epimerase family.

It catalyses the reaction L-ribulose 5-phosphate = L-xylulose 5-phosphate. Its pathway is cofactor degradation; L-ascorbate degradation; D-xylulose 5-phosphate from L-ascorbate: step 3/4. Catalyzes the isomerization of L-xylulose-5-phosphate to L-ribulose-5-phosphate. Is involved in the anaerobic L-ascorbate utilization. The sequence is that of L-ribulose-5-phosphate 3-epimerase UlaE from Salmonella typhimurium (strain LT2 / SGSC1412 / ATCC 700720).